A 245-amino-acid polypeptide reads, in one-letter code: Ribonuclease PH (245 aa).

Phosphate-binding positions include Arg87 and 125–127; that span reads GTR.

This sequence belongs to the RNase PH family. Homohexameric ring arranged as a trimer of dimers.

The enzyme catalyses tRNA(n+1) + phosphate = tRNA(n) + a ribonucleoside 5'-diphosphate. Its function is as follows. Phosphorolytic 3'-5' exoribonuclease that plays an important role in tRNA 3'-end maturation. Removes nucleotide residues following the 3'-CCA terminus of tRNAs; can also add nucleotides to the ends of RNA molecules by using nucleoside diphosphates as substrates, but this may not be physiologically important. Probably plays a role in initiation of 16S rRNA degradation (leading to ribosome degradation) during starvation. The chain is Ribonuclease PH from Streptomyces griseus subsp. griseus (strain JCM 4626 / CBS 651.72 / NBRC 13350 / KCC S-0626 / ISP 5235).